Consider the following 479-residue polypeptide: Adenylate kinase 8 (479 aa).

2 adenylate kinase regions span residues 58 to 258 and 269 to 471; these read PRIV…TYVQ and PRVL…SGII. 67–72 serves as a coordination point for ATP; that stretch reads ASGKTT. Positions 87-113 are NMP 1; it reads TLENLILNEFSYTATEARRLYLQRKTV. AMP is bound by residues 140–143, Q147, and R203; that span reads GIPE. Positions 177–206 are LID 1; the sequence is GKRIDPQTGEIYHTTFDWPPESEIQNRLMV. Residue 278–283 coordinates ATP; it reads GSGKSL. Residues 298-327 are NMP 2; sequence CCGQLLKEAVADRTTFGELIQPFFEKEMAV. AMP is bound by residues 325 to 327, 354 to 357, and Q361; these read MAV and GVPR. Positions 391–424 are LID 2; sequence LRRIDPVTGERYHLMYKPPPTMEIQARLLQNPKD. R392 contacts ATP.

It belongs to the adenylate kinase family. Interacts with CFAP45 and CFAP52; CFAP45 and AK8 dimerization may create a cavity at the interface of the dimer that can accommodate AMP. As to expression, expressed in respiratory cells (at protein level).

The protein localises to the cytoplasm. The protein resides in the cytosol. It is found in the cytoskeleton. Its subcellular location is the cilium axoneme. It catalyses the reaction AMP + ATP = 2 ADP. The catalysed reaction is a 2'-deoxyribonucleoside 5'-diphosphate + ATP = a 2'-deoxyribonucleoside 5'-triphosphate + ADP. The enzyme catalyses a ribonucleoside 5'-diphosphate + ATP = a ribonucleoside 5'-triphosphate + ADP. In terms of biological role, nucleoside monophosphate (NMP) kinase that catalyzes the reversible transfer of the terminal phosphate group between nucleoside triphosphates and monophosphates. Has highest activity toward AMP, and weaker activity toward dAMP, CMP and dCMP. Also displays broad nucleoside diphosphate kinase activity. The polypeptide is Adenylate kinase 8 (AK8) (Homo sapiens (Human)).